A 370-amino-acid polypeptide reads, in one-letter code: MLCPWKCQNAQRGLWNVFKLWVWIMLCCDFFAHHGTDCWTYHYSKRPMPWEKARAFCRENYTDLVAIQNKGEIEYLNKTLPFSRTYYWIGIRKVEGVWTWVGTNKSLTEEAKNWGAGEPNNRKSKEDCVEIYIKRNKDSGKWNDDACHKAKTALCYTASCKPWSCSGHGQCVEVINNYTCNCDLGYYGPECQFVTQCVPLEAPKLGTMACTHPLGNFSFMSQCAFNCSKGTDMIGVEETTCAPFGNWSSPEPTCRVIQCEPLTEPDLGTMDCNHPLVDFGFSSTCTFSCSEEAELTGEKKTICGLSGNWSSPSPRCQKINRTISINEESDYNPLFIPVAVMVTAFSGLAFIIWLARRLKRKSKKVSEKHG.

The N-terminal stretch at 1–28 (MLCPWKCQNAQRGLWNVFKLWVWIMLCC) is a signal peptide. Residues 29–38 (DFFAHHGTDC) constitute a propeptide that is removed on maturation. The Extracellular segment spans residues 39–333 (WTYHYSKRPM…SINEESDYNP (295 aa)). Positions 55–155 (AFCRENYTDL…ACHKAKTALC (101 aa)) constitute a C-type lectin domain. Cystine bridges form between C57–C155, C128–C147, C128–C160, C160–C171, C165–C180, C182–C191, C197–C241, C227–C254, C259–C303, and C289–C316. N-linked (GlcNAc...) asparagine glycans are attached at residues N60, N77, and N104. Ca(2+)-binding residues include E118, N120, E126, N143, and D144. The 37-residue stretch at 156-192 (YTASCKPWSCSGHGQCVEVINNYTCNCDLGYYGPECQ) folds into the EGF-like domain. N-linked (GlcNAc...) asparagine glycosylation is present at N177. Sushi domains are found at residues 195–256 (TQCV…TCRV) and 257–318 (IQCE…RCQK). Residues N216, N226, and N246 are each glycosylated (N-linked (GlcNAc...) asparagine). Residues N308 and N320 are each glycosylated (N-linked (GlcNAc...) asparagine). Residues 334–354 (LFIPVAVMVTAFSGLAFIIWL) form a helical membrane-spanning segment. Over 355–370 (ARRLKRKSKKVSEKHG) the chain is Cytoplasmic.

Belongs to the selectin/LECAM family. In terms of assembly, interaction with SELPLG/PSGL1 and PODXL2 is required for promoting recruitment and rolling of leukocytes. This interaction is dependent on the sialyl Lewis X glycan modification of SELPLG and PODXL2, and tyrosine sulfation modifications of SELPLG. Sulfation on 'Tyr-51' of SELPLG is important for L-selectin binding. N-glycosylated. In terms of tissue distribution, highly expressed in lymphocytes from peripheral lymph nodes. Low in lymphocytes isolated from Peyer patches.

The protein localises to the cell membrane. Its function is as follows. Calcium-dependent lectin that mediates cell adhesion by binding to glycoproteins on neighboring cells. Mediates the adherence of lymphocytes to endothelial cells of high endothelial venules in peripheral lymph nodes. Promotes initial tethering and rolling of leukocytes in endothelia. The polypeptide is L-selectin (SELL) (Bos taurus (Bovine)).